Here is a 595-residue protein sequence, read N- to C-terminus: Aspartate--tRNA(Asp/Asn) ligase (595 aa).

Glu175 is a binding site for L-aspartate. Positions Gln199–Lys202 are aspartate. Residues Arg221 and His454 each contribute to the L-aspartate site. Residue Arg221 to Glu223 coordinates ATP. Residue Glu488 coordinates ATP. Arg495 serves as a coordination point for L-aspartate. Gly540–Arg543 contacts ATP.

The protein belongs to the class-II aminoacyl-tRNA synthetase family. Type 1 subfamily. As to quaternary structure, homodimer.

The protein resides in the cytoplasm. The enzyme catalyses tRNA(Asx) + L-aspartate + ATP = L-aspartyl-tRNA(Asx) + AMP + diphosphate. Its function is as follows. Aspartyl-tRNA synthetase with relaxed tRNA specificity since it is able to aspartylate not only its cognate tRNA(Asp) but also tRNA(Asn). Reaction proceeds in two steps: L-aspartate is first activated by ATP to form Asp-AMP and then transferred to the acceptor end of tRNA(Asp/Asn). This is Aspartate--tRNA(Asp/Asn) ligase from Sinorhizobium medicae (strain WSM419) (Ensifer medicae).